The chain runs to 139 residues: Transcription initiation factor IIA small chain homolog (139 aa).

The segment at 113–139 (LSAQGPSKRVNRAHAAAAGDDEDDDSD) is disordered.

It belongs to the TFIIA subunit 2 family.

The protein resides in the nucleus. The protein is Transcription initiation factor IIA small chain homolog of Caenorhabditis elegans.